Here is a 155-residue protein sequence, read N- to C-terminus: Ribosome maturation factor RimP (155 aa).

This sequence belongs to the RimP family.

The protein localises to the cytoplasm. Functionally, required for maturation of 30S ribosomal subunits. In Dichelobacter nodosus (strain VCS1703A), this protein is Ribosome maturation factor RimP.